A 206-amino-acid polypeptide reads, in one-letter code: Large ribosomal subunit protein uL13z (206 aa).

Belongs to the universal ribosomal protein uL13 family.

In Arabidopsis thaliana (Mouse-ear cress), this protein is Large ribosomal subunit protein uL13z (RPL13AA).